Reading from the N-terminus, the 312-residue chain is Uracil-DNA glycosylase (312 aa).

Basic and acidic residues predominate over residues 1-11 (MSSACDHETEA). The tract at residues 1–61 (MSSACDHETE…PPKRRRPCGL (61 aa)) is disordered. Residues 22–33 (EENGSNSSTPTS) are compositionally biased toward polar residues. Asp155 functions as the Proton acceptor in the catalytic mechanism.

It belongs to the uracil-DNA glycosylase (UDG) superfamily. UNG family.

The protein resides in the host nucleus. The enzyme catalyses Hydrolyzes single-stranded DNA or mismatched double-stranded DNA and polynucleotides, releasing free uracil.. Functionally, excises uracil residues from the DNA which can arise as a result of misincorporation of dUMP residues by DNA polymerase or deamination of cytosines. Therefore may reduce deleterious uracil incorporation into the viral genome, particularly in terminally differentiated cells which lack DNA repair enzymes. This chain is Uracil-DNA glycosylase (61), found in Equine herpesvirus 1 (strain V592) (EHV-1).